Consider the following 400-residue polypeptide: NADPH dehydrogenase 2 (400 aa).

Residues Thr-38 and Gln-115 each coordinate FMN. Substrate is bound by residues His-192 and Asn-195. Tyr-197 (proton donor) is an active-site residue. Positions 244 and 349 each coordinate FMN. Ser-353 carries the phosphoserine modification. Tyr-376 serves as a coordination point for substrate. Position 379 is a phosphoserine (Ser-379).

It belongs to the NADH:flavin oxidoreductase/NADH oxidase family. Homodimer or heterodimer with OYE3. The cofactor is FMN.

The protein resides in the cytoplasm. It localises to the nucleus. Its subcellular location is the mitochondrion. The catalysed reaction is A + NADPH + H(+) = AH2 + NADP(+). Functionally, flavin-dependent enoate reductase that catalyzes the chemo- and stereoslective hydrogenation of electron-poor alkenes. The enzyme is reduced by NADPH, and oxygen, quinones, and alpha,beta-unsaturated aldehydes and ketones can act as electron acceptors to complete catalytic turnover. The physiological oxidant remains elusive. Has an antioxidant activity, reducing reactive oxygen species (ROS) levels when overexpressed. Formation of OYE2-OYE3 heterodimers contribute to the induction of programmed cell death upon oxidative stress. This chain is NADPH dehydrogenase 2, found in Saccharomyces cerevisiae (strain ATCC 204508 / S288c) (Baker's yeast).